The following is a 291-amino-acid chain: 3-methyl-2-oxobutanoate hydroxymethyltransferase (291 aa).

Residues 1-10 (MTQLSAAQTP) are compositionally biased toward polar residues. Residues 1–20 (MTQLSAAQTPQPKPADGNRA) are disordered. Aspartate 71 and aspartate 110 together coordinate Mg(2+). 3-methyl-2-oxobutanoate is bound by residues 71–72 (DS), aspartate 110, and lysine 140. Glutamate 142 lines the Mg(2+) pocket. Glutamate 208 acts as the Proton acceptor in catalysis.

The protein belongs to the PanB family. In terms of assembly, homodecamer; pentamer of dimers. Mg(2+) serves as cofactor.

It localises to the cytoplasm. It catalyses the reaction 3-methyl-2-oxobutanoate + (6R)-5,10-methylene-5,6,7,8-tetrahydrofolate + H2O = 2-dehydropantoate + (6S)-5,6,7,8-tetrahydrofolate. The protein operates within cofactor biosynthesis; (R)-pantothenate biosynthesis; (R)-pantoate from 3-methyl-2-oxobutanoate: step 1/2. Its function is as follows. Catalyzes the reversible reaction in which hydroxymethyl group from 5,10-methylenetetrahydrofolate is transferred onto alpha-ketoisovalerate to form ketopantoate. This Streptomyces coelicolor (strain ATCC BAA-471 / A3(2) / M145) protein is 3-methyl-2-oxobutanoate hydroxymethyltransferase.